Here is a 403-residue protein sequence, read N- to C-terminus: DNA replication and repair protein RecF (403 aa).

An ATP-binding site is contributed by 30–37 (GSNGLGKT).

It belongs to the RecF family.

It localises to the cytoplasm. The RecF protein is involved in DNA metabolism; it is required for DNA replication and normal SOS inducibility. RecF binds preferentially to single-stranded, linear DNA. It also seems to bind ATP. This is DNA replication and repair protein RecF from Bifidobacterium adolescentis (strain ATCC 15703 / DSM 20083 / NCTC 11814 / E194a).